The primary structure comprises 122 residues: Small ribosomal subunit protein uS13 (122 aa).

The interval 99–122 (RGQRTHTNARTRKGPAKAIAGKKK) is disordered.

Belongs to the universal ribosomal protein uS13 family. Part of the 30S ribosomal subunit. Forms a loose heterodimer with protein S19. Forms two bridges to the 50S subunit in the 70S ribosome.

Functionally, located at the top of the head of the 30S subunit, it contacts several helices of the 16S rRNA. In the 70S ribosome it contacts the 23S rRNA (bridge B1a) and protein L5 of the 50S subunit (bridge B1b), connecting the 2 subunits; these bridges are implicated in subunit movement. Contacts the tRNAs in the A and P-sites. The chain is Small ribosomal subunit protein uS13 from Parvibaculum lavamentivorans (strain DS-1 / DSM 13023 / NCIMB 13966).